The sequence spans 394 residues: Metal tolerance protein 11 (394 aa).

Over 1 to 103 the chain is Cytoplasmic; it reads MVEPASPDSD…EQDNLAKSET (103 aa). Residues 104 to 124 form a helical membrane-spanning segment; sequence LAIRISNIANMLLFAAKVYAS. Residues 125–130 are Vacuolar-facing; it reads VTSGSL. A helical transmembrane segment spans residues 131 to 151; it reads AIIASTLDSLLDLLSGFILWF. Over 152 to 172 the chain is Cytoplasmic; sequence TAFSMQTPNPYQYPIGKKRMQ. Residues 173 to 193 traverse the membrane as a helical segment; the sequence is PLGILVFASVMATLGLQIILE. Residues 194 to 212 lie on the Vacuolar side of the membrane; sequence SLRTMLSSHKEFNLTKEQE. A helical membrane pass occupies residues 213–233; that stretch reads SWVVGIMLSVTLVKLLLVLYC. Residues 234–251 lie on the Cytoplasmic side of the membrane; it reads RSFTNEIVKAYAQDHFFD. The chain crosses the membrane as a helical span at residues 252–272; the sequence is VITNIIGLIAVILANYIDYWI. Position 273 (Asp-273) is a topological domain, vacuolar. Residues 274–294 traverse the membrane as a helical segment; sequence PVGAIILALYTIRTWSMTVLE. Topologically, residues 295-394 are cytoplasmic; that stretch reads NVNSLVGKSA…HKPEHARSHC (100 aa).

The protein belongs to the cation diffusion facilitator (CDF) transporter (TC 2.A.4) family. SLC30A subfamily. Widely expressed.

The protein localises to the prevacuolar compartment membrane. The protein resides in the golgi apparatus membrane. Functionally, cation/proton antiporter involved in endogenous manganese tolerance probably through vesicular trafficking and exocytosis. In Arabidopsis thaliana (Mouse-ear cress), this protein is Metal tolerance protein 11 (MTP11).